Consider the following 153-residue polypeptide: Calmodulin-like protein 3 (153 aa).

EF-hand domains lie at 1–36 (MDQA…LGIY), 37–72 (IPDK…IMEE), 74–109 (DEEE…LGLK), and 112–147 (RTLE…GGFA). Residues D14, N16, D18, K20, E25, D50, N52, D54, Y56, E61, D87, N89, D91, E98, D125, D127, D129, M131, and E136 each coordinate Ca(2+).

It belongs to the calmodulin family.

Potential calcium sensor. This Arabidopsis thaliana (Mouse-ear cress) protein is Calmodulin-like protein 3 (CML3).